Here is a 383-residue protein sequence, read N- to C-terminus: DNA-directed RNA polymerase subunit alpha (383 aa).

An alpha N-terminal domain (alpha-NTD) region spans residues 1-240 (MEKKTGLIQF…NLFHQISPPL (240 aa)). Positions 306-383 (IDKQMNDSVN…RFNMELLPTK (78 aa)) are alpha C-terminal domain (alpha-CTD).

It belongs to the RNA polymerase alpha chain family. In plastids the minimal PEP RNA polymerase catalytic core is composed of four subunits: alpha, beta, beta', and beta''. When a (nuclear-encoded) sigma factor is associated with the core the holoenzyme is formed, which can initiate transcription.

The protein resides in the plastid. It localises to the chloroplast. The catalysed reaction is RNA(n) + a ribonucleoside 5'-triphosphate = RNA(n+1) + diphosphate. In terms of biological role, DNA-dependent RNA polymerase catalyzes the transcription of DNA into RNA using the four ribonucleoside triphosphates as substrates. This is DNA-directed RNA polymerase subunit alpha from Staurastrum punctulatum (Green alga).